We begin with the raw amino-acid sequence, 430 residues long: Type 3 secretion system ATPase (430 aa).

Residue 162–167 coordinates ATP; the sequence is GCGKTF.

Belongs to the ATPase alpha/beta chains family. T3SS ATPase subfamily. The core secretion machinery of the T3SS is composed of approximately 20 different proteins, including cytoplasmic components, a base, an export apparatus and a needle. This subunit is part of the cytosolic complex. Forms homohexamers. Interacts directly with MxiN/SctL (stator protein) and Spa13/SctO (stalk protein). Can form a soluble complex with Spa33/SctQ, MxiN/SctL and MxiK/SctK.

The protein localises to the cytoplasm. It carries out the reaction ATP + H2O + cellular proteinSide 1 = ADP + phosphate + cellular proteinSide 2.. Its activity is regulated as follows. Oligomerization increases ATPase activity. Monomeric forms exhibit low-level ATPase activity by forming short-lived oligomers with active site contributions from at least two protomers. In contrast, oligomers exhibit enhanced ATP hydrolysis rates that likely result from multiple preformed active sites within the oligomeric complex. Oligomerization is important for both enzyme activation and T3SS function. Activity is regulated by MxiN/SctL, which differentially regulates the activity of the monomer and the oligomer: it up-regulates the ATPase activity of the monomer, while it down-regulates the activity of the oligomer. ATPase component of the type III secretion system (T3SS), also called injectisome, which is used to inject bacterial effector proteins into eukaryotic host cells. Acts as a molecular motor to provide the energy that is required for the export of proteins. Required for type III secretion apparatus (T3SA) formation, proper protein secretion, host cell invasion and virulence. May play a critical role in T3SS substrate recognition, disassembly of the effector/chaperone complex and unfolding of the effector in an ATP-dependent manner prior to secretion. This is Type 3 secretion system ATPase from Shigella flexneri.